The primary structure comprises 157 residues: Protein Smg (157 aa).

Belongs to the Smg family.

In Klebsiella pneumoniae (strain 342), this protein is Protein Smg.